Consider the following 78-residue polypeptide: Alpha-amylase inhibitor Haim-1 (78 aa).

2 cysteine pairs are disulfide-bonded: Cys-11-Cys-27 and Cys-45-Cys-72.

Its function is as follows. Inhibits mammalian alpha-amylases specifically but has no action on plant and microbial alpha-amylases. This chain is Alpha-amylase inhibitor Haim-1, found in Streptomyces griseosporeus.